Reading from the N-terminus, the 432-residue chain is Protein arginine N-methyltransferase 2 (432 aa).

A compositionally biased stretch (low complexity) spans 1–11 (MESSSECSSIS). Residues 1–22 (MESSSECSSISDFQDSTEGDDA) form a disordered region. Positions 29-88 (LCMREYVVICDYVATDNTQLSLCSGDKVLLLNAVSQDWWWVNHNGTCGYVPASHLHDALN) constitute an SH3 domain. The region spanning 101-405 (DEEYYGSYKT…FERNSVWRRH (305 aa)) is the SAM-dependent MTase PRMT-type domain. Residues H114, R123, G147, E170, and E199 each contribute to the S-adenosyl-L-methionine site. Active-site residues include E213 and E222.

Belongs to the class I-like SAM-binding methyltransferase superfamily. Protein arginine N-methyltransferase family. Interacts with ctnnb1.

The protein localises to the cytoplasm. The protein resides in the nucleus. The catalysed reaction is L-arginyl-[protein] + 2 S-adenosyl-L-methionine = N(omega),N(omega)-dimethyl-L-arginyl-[protein] + 2 S-adenosyl-L-homocysteine + 2 H(+). Arginine methyltransferase that methylates the guanidino nitrogens of arginyl residues in proteins such as histones. Involved in growth regulation. Involved in embryonic dorsal development. The polypeptide is Protein arginine N-methyltransferase 2 (prmt2) (Xenopus laevis (African clawed frog)).